The primary structure comprises 639 residues: Sodium-dependent phosphate transport protein 2A (639 aa).

Residues 1–103 (MISYGENLGG…LRRAGVTLLK (103 aa)) are Cytoplasmic-facing. Residues Ser-14 and Ser-34 each carry the phosphoserine modification. The chain crosses the membrane as a helical span at residues 104-125 (VPLMLSFLYLFVCSLDVLSSAF). Topologically, residues 126 to 145 (QLAGGKVAGDIFKDNAILSN) are extracellular. The chain crosses the membrane as a helical span at residues 146–163 (PVAGLVVGILVTVLVQSS). At 164–165 (ST) the chain is on the cytoplasmic side. A helical membrane pass occupies residues 166–185 (STSIVVSMVSSGLLEVSSAI). Topologically, residues 186 to 347 (PIIMGSNIGT…HIFVDTGLPD (162 aa)) are extracellular. 2 disulfides stabilise this stretch: Cys-225-Cys-522 and Cys-306-Cys-336. 3 N-linked (GlcNAc...) asparagine glycosylation sites follow: Asn-298, Asn-323, and Asn-330. Residues 348–370 (LAVGLILLAGSLALLCTCLILLV) traverse the membrane as a helical segment. Over 371 to 412 (KMLNSLLKGQVAKVIQKVINTDFPTPFTWATGYFAMVVGASM) the chain is Cytoplasmic. The helical transmembrane segment at 413 to 436 (TFVVQSSSVFTSAITPLIGLGVIS) threads the bilayer. Over 437 to 466 (IERAYPLTLGSNIGTTTTAILAALASPREK) the chain is Extracellular. A helical membrane pass occupies residues 467–487 (LSSAFQIALCHFFFNISGILL). The Cytoplasmic portion of the chain corresponds to 488-513 (WYPVPCTRLPIRMAKALGKRTAKYRW). At Thr-508 the chain carries Phosphothreonine; by PKC. A helical membrane pass occupies residues 514–534 (FAVLYLLLCFLLLPSMVFGLS). At 535-539 (MAGWR) the chain is on the extracellular side. The helical transmembrane segment at 540–561 (AMVGVGAPFGALLAFVVLVSAL) threads the bilayer. The Cytoplasmic segment spans residues 562–639 (QHRSPGCLPK…MPHHHDATRL (78 aa)). Ser-607 is modified (phosphoserine). A Phosphothreonine modification is found at Thr-623. At Ser-625 the chain carries Phosphoserine.

The protein belongs to the SLC34A transporter family. In terms of assembly, interacts via its C-terminal region with NHERF4. Interacts with NHERF1. Interacts with TMEM174; regulates SLC34A1 internalization by PTH and FGF23.

The protein resides in the apical cell membrane. It localises to the cell membrane. The catalysed reaction is 3 Na(+)(out) + phosphate(out) = 3 Na(+)(in) + phosphate(in). Functionally, involved in actively transporting phosphate into cells via Na(+) cotransport in the renal brush border membrane. The cotransport has a Na(+):Pi stoichiometry of 3:1 and is electrogenic. The polypeptide is Sodium-dependent phosphate transport protein 2A (Ovis aries (Sheep)).